The following is a 100-amino-acid chain: Omega-hexatoxin-Asp2b (100 aa).

Positions 1-23 are cleaved as a signal peptide; sequence MKFSKLSITLAVILTQAVFVLCG. Positions 24-55 are excised as a propeptide; the sequence is MKNEDFMEKGLESNELHDAIKKPVNSGKPDTE. 3 disulfides stabilise this stretch: C60–C73, C66–C79, and C72–C84.

Belongs to the neurotoxin 15 family. 02 (omega-actx) subfamily. Expressed by the venom gland.

It localises to the secreted. Its function is as follows. Potent inhibitor of insect, but not mammalian, voltage-gated calcium channels (Cav). This is Omega-hexatoxin-Asp2b from Atrax sp. (strain Illawarra) (Funnel-web spider).